The primary structure comprises 555 residues: MASCYNPWRLFPGMSTAVPAGPVTAPAHSRTCKSSKVFSALPHRRGLLFLGTRRARIKCVKDDSLHFDPSKIEPPPYSSYFDSTSGQLEPASGARASIPGKEYWPEGTAARVRAARAPAPVGESAGMPSFGTKPGSRRRGYKEQVTSASGTEGAQTDDRKDGDEPDVAIIGSGDDALEEIKDSVDEYVIYETPEEEELSEYDMDKMMGRPHPFIDPAKAMSLGEPKTSEELWWHWRRKSQEEEMWSRWQRRRPDVDTVFAKAMAETGQIKIFGDHPSRTEAALAKTRRHLYKEERLEAEQRRLEEIGPIAYYSEWVEAYKNKDTSREAIQKHFEETGEDENVQLIKMFQHQTAGEYRIMMGTDVRIQRDPLAMRMREDQIKQIWGGDPVYPTINYVQDPDEVIDYRGPEFHEPTPEVVPYLMEHGIMITKEELYARLNEEREDVNQDITYIPEAKDPMATAIDIGEHSYNEDSDDEDEDVDKAAAQPQSLEDEEDDRDDVAEVEEKVNQNWSALKSTGQAEKPKEKSKKDEMTLKEAIDDSENLTDFLMDFEETE.

A chloroplast-targeting transit peptide spans 1-58 (MASCYNPWRLFPGMSTAVPAGPVTAPAHSRTCKSSKVFSALPHRRGLLFLGTRRARIK). Disordered stretches follow at residues 80 to 100 (YFDS…SIPG), 115 to 167 (ARAP…EPDV), and 468 to 541 (SYNE…IDDS). The segment covering 144–154 (QVTSASGTEGA) has biased composition (polar residues). 2 stretches are compositionally biased toward acidic residues: residues 471–480 (EDSDDEDEDV) and 490–502 (LEDE…DVAE). Over residues 508-519 (NQNWSALKSTGQ) the composition is skewed to polar residues. The segment covering 521–538 (EKPKEKSKKDEMTLKEAI) has biased composition (basic and acidic residues).

In terms of assembly, component of the plastid-encoded plastid RNA polymerase (PEP) complex.

The protein resides in the plastid. Its subcellular location is the chloroplast stroma. The protein localises to the nucleus. Its function is as follows. Required for the activity of the plastid-encoded RNA polymerase (PEP) and full expression of genes transcribed by PEP. Required for the proper build-up and formation of the PEP-complex. Binds single-stranded (ss) DNA and RNA, but not double-stranded (ds) DNA. The chain is Protein PLASTID TRANSCRIPTIONALLY ACTIVE 12, chloroplastic from Zea mays (Maize).